A 430-amino-acid chain; its full sequence is Enolase (430 aa).

A (2R)-2-phosphoglycerate-binding site is contributed by Q167. E209 (proton donor) is an active-site residue. D245, E286, and D313 together coordinate Mg(2+). Positions 338, 367, 368, and 389 each coordinate (2R)-2-phosphoglycerate. The Proton acceptor role is filled by K338.

This sequence belongs to the enolase family. Mg(2+) is required as a cofactor.

The protein localises to the cytoplasm. The protein resides in the secreted. It localises to the cell surface. It catalyses the reaction (2R)-2-phosphoglycerate = phosphoenolpyruvate + H2O. It functions in the pathway carbohydrate degradation; glycolysis; pyruvate from D-glyceraldehyde 3-phosphate: step 4/5. Catalyzes the reversible conversion of 2-phosphoglycerate (2-PG) into phosphoenolpyruvate (PEP). It is essential for the degradation of carbohydrates via glycolysis. In Synechococcus sp. (strain WH7803), this protein is Enolase.